The following is a 211-amino-acid chain: LexA repressor (211 aa).

The H-T-H motif DNA-binding region spans 27–47; the sequence is QTEIARAFGFKGVRAVQHHLD. Active-site for autocatalytic cleavage activity residues include Ser-131 and Lys-168.

The protein belongs to the peptidase S24 family. As to quaternary structure, homodimer.

The catalysed reaction is Hydrolysis of Ala-|-Gly bond in repressor LexA.. Represses a number of genes involved in the response to DNA damage (SOS response), including recA and lexA. In the presence of single-stranded DNA, RecA interacts with LexA causing an autocatalytic cleavage which disrupts the DNA-binding part of LexA, leading to derepression of the SOS regulon and eventually DNA repair. The polypeptide is LexA repressor (Xylella fastidiosa (strain 9a5c)).